Consider the following 322-residue polypeptide: MLVDSYGRVIDYLRISVTQRCNFRCLYCMPKTPFEWSAKENLLSFEELFMFVKVCIDEGVKKIRITGGEPLVRKDLYKFIAMISEYKQDIDLALTTNASLLKQQAKDLRQAGLKRINISLDTLKEDVAFKLAQKNILKDVLNGIDEALNLGFNVKFNTVALKGINDSEFIDLLEFAKVRKSQIRFIEFMENYHAYGDLKGLKSAEILNIIAQKYSFKQGEKSSNAPATIYELEDGYKFGIIDPHSHDFCDSCNRIRLSAEGLLIPCLYYDEALSIKKAIRNKDIAGACEVLKTVIKNKSEKNRWAENEANQSSTRAFYQTGG.

A Radical SAM core domain is found at 5–217; it reads SYGRVIDYLR…NIIAQKYSFK (213 aa). Residue Arg-14 participates in GTP binding. Cys-21 and Cys-25 together coordinate [4Fe-4S] cluster. Tyr-27 is an S-adenosyl-L-methionine binding site. Cys-28 contributes to the [4Fe-4S] cluster binding site. Position 64 (Arg-64) interacts with GTP. Position 68 (Gly-68) interacts with S-adenosyl-L-methionine. Thr-95 contacts GTP. Ser-119 is an S-adenosyl-L-methionine binding site. Residue Lys-155 participates in GTP binding. Met-189 contacts S-adenosyl-L-methionine. Residues Cys-249 and Cys-252 each contribute to the [4Fe-4S] cluster site. A GTP-binding site is contributed by 254–256; sequence RIR. Cys-266 lines the [4Fe-4S] cluster pocket.

Belongs to the radical SAM superfamily. MoaA family. As to quaternary structure, monomer and homodimer. Requires [4Fe-4S] cluster as cofactor.

It catalyses the reaction GTP + AH2 + S-adenosyl-L-methionine = (8S)-3',8-cyclo-7,8-dihydroguanosine 5'-triphosphate + 5'-deoxyadenosine + L-methionine + A + H(+). It participates in cofactor biosynthesis; molybdopterin biosynthesis. Functionally, catalyzes the cyclization of GTP to (8S)-3',8-cyclo-7,8-dihydroguanosine 5'-triphosphate. The chain is GTP 3',8-cyclase from Campylobacter lari (strain RM2100 / D67 / ATCC BAA-1060).